Reading from the N-terminus, the 135-residue chain is Lymphocyte antigen 6B (135 aa).

An N-terminal signal peptide occupies residues 1–26 (MNRSCAMKSCVLILLLALLCAERAQG). The region spanning 27 to 119 (LNCYNCTMIP…PTGGSTWTMA (93 aa)) is the UPAR/Ly6 domain. 5 cysteine pairs are disulfide-bonded: Cys-29–Cys-54, Cys-32–Cys-41, Cys-47–Cys-75, Cys-79–Cys-99, and Cys-100–Cys-105. Residue Gly-113 is the site of GPI-anchor amidated glycine attachment. The propeptide at 114 to 135 (STWTMAGVLLFILGSVLLQTLL) is removed in mature form.

Its subcellular location is the cell membrane. The protein is Lymphocyte antigen 6B (Ly6b) of Rattus norvegicus (Rat).